The sequence spans 390 residues: Elongation factor Tu 2 (390 aa).

The tr-type G domain occupies 10 to 201 (KPHVNVGTIG…LDEYVAVPPR (192 aa)). Residues 19 to 26 (GHVDHGKT) are G1. 19–26 (GHVDHGKT) contacts GTP. Thr-26 serves as a coordination point for Mg(2+). The tract at residues 55 to 59 (GITIA) is G2. A G3 region spans residues 76 to 79 (DCPG). Residues 76-80 (DCPGH) and 131-134 (NKAD) each bind GTP. The segment at 131-134 (NKAD) is G4. Positions 168–170 (SAL) are G5.

This sequence belongs to the TRAFAC class translation factor GTPase superfamily. Classic translation factor GTPase family. EF-Tu/EF-1A subfamily. As to quaternary structure, monomer.

Its subcellular location is the cytoplasm. The catalysed reaction is GTP + H2O = GDP + phosphate + H(+). GTP hydrolase that promotes the GTP-dependent binding of aminoacyl-tRNA to the A-site of ribosomes during protein biosynthesis. In Wolbachia pipientis wMel, this protein is Elongation factor Tu 2.